The sequence spans 1472 residues: Type IV pilus biogenesis factor PilY1 homolog PD_1611 (1472 aa).

The Ca(2+) site is built by Asp-1170, Asp-1172, Asp-1174, Leu-1176, and Asp-1178. The span at 1383–1397 shows a compositional bias: polar residues; the sequence is RGSRSSIGNSDTGAV. Positions 1383 to 1403 are disordered; that stretch reads RGSRSSIGNSDTGAVSTGGDA.

Belongs to the PilY1 family.

The protein resides in the fimbrium. In terms of biological role, one of the three PilY1 homologs of X.fastidiosa, which are involved in bacterial twitching motility as component of the filamentous type IV pili (T4P). The twitching motility of this protein is enhanced by calcium, which may provide the bacterium an adaptive advantage in environments with high calcium concentrations. This chain is Type IV pilus biogenesis factor PilY1 homolog PD_1611, found in Xylella fastidiosa (strain Temecula1 / ATCC 700964).